The primary structure comprises 274 residues: Type III pantothenate kinase (274 aa).

ATP is bound at residue 6–13; that stretch reads DVGNTNTV. Substrate-binding positions include tyrosine 110 and 117-120; that span reads GADR. Aspartate 119 functions as the Proton acceptor in the catalytic mechanism. Aspartate 139 contacts K(+). Threonine 142 is an ATP binding site. Substrate is bound at residue threonine 194.

It belongs to the type III pantothenate kinase family. In terms of assembly, homodimer. NH4(+) serves as cofactor. K(+) is required as a cofactor.

The protein localises to the cytoplasm. The enzyme catalyses (R)-pantothenate + ATP = (R)-4'-phosphopantothenate + ADP + H(+). Its pathway is cofactor biosynthesis; coenzyme A biosynthesis; CoA from (R)-pantothenate: step 1/5. Catalyzes the phosphorylation of pantothenate (Pan), the first step in CoA biosynthesis. This chain is Type III pantothenate kinase, found in Koribacter versatilis (strain Ellin345).